A 277-amino-acid chain; its full sequence is Trypsin-2 (277 aa).

Residues 1–19 form the signal peptide; the sequence is MSNKIAILLLAVVVAVVAC. Positions 20 to 50 are cleaved as a propeptide — activation peptide; that stretch reads AQAQPSRRHHLVHPLLPRFLPRLHRDSNGHR. The region spanning 51–276 is the Peptidase S1 domain; that stretch reads VVGGFQIDVS…VRDWVRENSG (226 aa). C76 and C92 are oxidised to a cystine. Residues H91 and D136 each act as charge relay system in the active site. 2 disulfide bridges follow: C201/C217 and C228/C252. Catalysis depends on S232, which acts as the Charge relay system.

The protein belongs to the peptidase S1 family. In terms of tissue distribution, midgut.

The protein resides in the secreted. It catalyses the reaction Preferential cleavage: Arg-|-Xaa, Lys-|-Xaa.. Functionally, major function may be to aid in digestion of the blood meal. The polypeptide is Trypsin-2 (TRYP2) (Anopheles gambiae (African malaria mosquito)).